The primary structure comprises 268 residues: Ribosomal RNA small subunit methyltransferase A (268 aa).

6 residues coordinate S-adenosyl-L-methionine: Asn-12, Leu-14, Gly-38, Glu-59, Asp-82, and Asn-107.

It belongs to the class I-like SAM-binding methyltransferase superfamily. rRNA adenine N(6)-methyltransferase family. RsmA subfamily.

It is found in the cytoplasm. The enzyme catalyses adenosine(1518)/adenosine(1519) in 16S rRNA + 4 S-adenosyl-L-methionine = N(6)-dimethyladenosine(1518)/N(6)-dimethyladenosine(1519) in 16S rRNA + 4 S-adenosyl-L-homocysteine + 4 H(+). Specifically dimethylates two adjacent adenosines (A1518 and A1519) in the loop of a conserved hairpin near the 3'-end of 16S rRNA in the 30S particle. May play a critical role in biogenesis of 30S subunits. The protein is Ribosomal RNA small subunit methyltransferase A of Aster yellows witches'-broom phytoplasma (strain AYWB).